Here is a 623-residue protein sequence, read N- to C-terminus: Bifunctional enzyme CysN/CysC (623 aa).

The sulfate adenylyltransferase stretch occupies residues 1 to 450; sequence MQSVIAYLKQ…HVARARIKGQ (450 aa). The 215-residue stretch at 14 to 228 folds into the tr-type G domain; the sequence is KPLLRFITCG…YLEALEPADV (215 aa). The tract at residues 23 to 30 is G1; the sequence is GSVDDGKS. GTP is bound at residue 23-30; sequence GSVDDGKS. Residues 81 to 85 are G2; that stretch reads GITID. A G3 region spans residues 102–105; the sequence is DCPG. GTP is bound by residues 102–106 and 157–160; these read DCPGH and NKMD. Positions 157-160 are G4; sequence NKMD. Residues 194-196 form a G5 region; sequence SAL. The interval 451 to 623 is adenylyl-sulfate kinase; sequence TPKVLWFTGL…VLSLLGVEGK (173 aa). Position 459-466 (459-466) interacts with ATP; that stretch reads GLSGAGKS. Ser-533 serves as the catalytic Phosphoserine intermediate.

In the C-terminal section; belongs to the APS kinase family. The protein in the N-terminal section; belongs to the TRAFAC class translation factor GTPase superfamily. Classic translation factor GTPase family. CysN/NodQ subfamily. In terms of assembly, heterodimer composed of CysD, the smaller subunit, and CysNC.

It catalyses the reaction sulfate + ATP + H(+) = adenosine 5'-phosphosulfate + diphosphate. The enzyme catalyses adenosine 5'-phosphosulfate + ATP = 3'-phosphoadenylyl sulfate + ADP + H(+). The protein operates within sulfur metabolism; hydrogen sulfide biosynthesis; sulfite from sulfate: step 1/3. Its pathway is sulfur metabolism; hydrogen sulfide biosynthesis; sulfite from sulfate: step 2/3. In terms of biological role, with CysD forms the ATP sulfurylase (ATPS) that catalyzes the adenylation of sulfate producing adenosine 5'-phosphosulfate (APS) and diphosphate, the first enzymatic step in sulfur assimilation pathway. APS synthesis involves the formation of a high-energy phosphoric-sulfuric acid anhydride bond driven by GTP hydrolysis by CysN coupled to ATP hydrolysis by CysD. Its function is as follows. APS kinase catalyzes the synthesis of activated sulfate. This Xylella fastidiosa (strain Temecula1 / ATCC 700964) protein is Bifunctional enzyme CysN/CysC (cysNC).